Consider the following 244-residue polypeptide: Thiol S-methyltransferase TMT1A (244 aa).

Positions 1-28 are targeting to lipid droplets; that stretch reads MELTIFILRLAIYILTFPLYLLNFLGLW. Positions 1 to 29 are cleaved as a signal peptide; sequence MELTIFILRLAIYILTFPLYLLNFLGLWS.

It belongs to the methyltransferase superfamily. As to quaternary structure, (Microbial infection) Interacts with HCV non-structural protein 4B/NS4B (via C-terminal region); this interaction may promote the recruitment of NS4B in the proximity of lipid droplet. Self-associates. Interacts with SNRNP200; this interaction may promote the odontogenic differentiation. Methylated at lysine residues most likely by EZH2. As to expression, expressed in the liver.

Its subcellular location is the lipid droplet. The protein localises to the endoplasmic reticulum. It localises to the membrane. It is found in the microsome. The protein resides in the cytoplasm. Its subcellular location is the cytosol. It carries out the reaction a thiol + S-adenosyl-L-methionine = a methyl thioether + S-adenosyl-L-homocysteine + H(+). The enzyme catalyses an adenosine in mRNA + S-adenosyl-L-methionine = an N(6)-methyladenosine in mRNA + S-adenosyl-L-homocysteine + H(+). Inhibited by 2,3-dichloro-alpha-methylbenzylamine (DCMB). In terms of biological role, thiol S-methyltransferase that catalyzes the transfer of a methyl group from S-adenosyl-L-methionine to alkyl and phenolic thiol-containing acceptor substrates. Together with TMT1B accounts for most of S-thiol methylation activity in the endoplasmic reticulum of hepatocytes. Able to methylate the N6 position of adenosine residues in long non-coding RNAs (lncRNAs). May facilitate lncRNAs transfer into exosomes at the tumor-stroma interface. Promotes osteogenic and odontogenic differentiation by regulating the expression of genes involved in stem cell differentiation and survival. Targeted from the endoplasmic reticulum to lipid droplets, where it recruits cellular proteins to form functional organelles. Its function is as follows. (Microbial infection) May be involved in the assembly and release stages of hepatitis C virus (HCV) life cycle and thus play a crucial role in HCV propagation. This is Thiol S-methyltransferase TMT1A from Homo sapiens (Human).